Consider the following 156-residue polypeptide: Putative increased recombination centers protein 11 (156 aa).

Residues 20-42 (AALGATCLLHYLTTSLSIRFFFH) traverse the membrane as a helical segment.

The protein localises to the membrane. The chain is Putative increased recombination centers protein 11 (IRC11) from Saccharomyces cerevisiae (strain ATCC 204508 / S288c) (Baker's yeast).